A 439-amino-acid polypeptide reads, in one-letter code: Serine/threonine-protein kinase 2 (439 aa).

The 353-residue stretch at 87 to 439 folds into the Protein kinase domain; that stretch reads NDDFYHISTG…IFSDWINGGN (353 aa). ATP is bound by residues 93-101 and K117; that span reads ISTGGYGIV. D307 serves as the catalytic Proton acceptor.

The protein belongs to the protein kinase superfamily. Ser/Thr protein kinase family. In terms of processing, phosphorylated in vivo. Autophosphorylated in vitro.

The protein localises to the host endoplasmic reticulum. The protein resides in the host endoplasmic reticulum-Golgi intermediate compartment. The catalysed reaction is L-seryl-[protein] + ATP = O-phospho-L-seryl-[protein] + ADP + H(+). The enzyme catalyses L-threonyl-[protein] + ATP = O-phospho-L-threonyl-[protein] + ADP + H(+). In terms of biological role, essential serine-protein kinase involved in the early stage of virion morphogenesis. The chain is Serine/threonine-protein kinase 2 (OPG054) from Vaccinia virus (strain Tian Tan) (VACV).